A 463-amino-acid chain; its full sequence is Cysteine--tRNA ligase (463 aa).

C33 is a Zn(2+) binding site. Residues 35–45 carry the 'HIGH' region motif; it reads PTVYDFAHIGN. Zn(2+) is bound by residues C221, H246, and E250. A 'KMSKS' region motif is present at residues 279–283; the sequence is KMSKS. K282 contributes to the ATP binding site.

This sequence belongs to the class-I aminoacyl-tRNA synthetase family. Monomer. Requires Zn(2+) as cofactor.

The protein localises to the cytoplasm. It catalyses the reaction tRNA(Cys) + L-cysteine + ATP = L-cysteinyl-tRNA(Cys) + AMP + diphosphate. This Rhizobium leguminosarum bv. trifolii (strain WSM2304) protein is Cysteine--tRNA ligase.